A 78-amino-acid polypeptide reads, in one-letter code: Short neurotoxin OH-46 (78 aa).

Positions 1–21 (MKNLLLTFLVVTIVCLDLGYT) are cleaved as a signal peptide. 4 cysteine pairs are disulfide-bonded: C24/C40, C33/C58, C62/C70, and C71/C76.

It belongs to the three-finger toxin family. Short-chain subfamily. In terms of tissue distribution, expressed by the venom gland.

The protein localises to the secreted. In terms of biological role, this three-finger toxin binds and inhibits the nicotinic acetylcholine receptor (nAChR). This is Short neurotoxin OH-46 from Ophiophagus hannah (King cobra).